We begin with the raw amino-acid sequence, 842 residues long: MKTSSFIIVILLCFRIENVIAHTFSFDASLLNHGSGGIDLTLLEKGGQLPGIYPVDIILNGSRIDSRDIFFYTKKNRHGEYYLKPCLTRDILINYGVKTEEYPNLFRQNSEKNRDSSDCADLSVIPQATEDYHFIKQQLILGIPQVAIRPPLTGIAHETMWDDGISAFLLNWQVEGSHWEYRSNTRNSSDNFWASLEPGINLGSWRIRNLTTWNKSSGQSGKWESSYIRVERGLNNIKSRLTFGDDYTPSDIFDSVPFRGGMLGSDENMVPYNQREFAPVVRGIARTQARIEVRQNGYLIQSRIVSPGAFALTDLPVTGNGGDLQVWVLESDGTIQTFNVPFTTPAIALREGYLKYNVTVGEYRPSDDSIEGAYLGQLTAMYGLPWSLTAFGGIQVSEHYQGNALGLGLSLGGFGSISLDTIYSRGQQKGYSNEIGKTWRVRYDKSFELTGTSFAAGYQDSSAGYHSLADVLDTYRNGTAYRSYDNRIRRTTINISQALGEWGSVALNGGRDEYRDKVKQDYIGASYSNSWKGITFAVNWSRNNNIGDYYSNSLRTENNLNLWMSIPMKRWLGGDDKGVTATAQIQRITGQNTLYETGLNGRAFGQKLYWDIREQIVPGSKYDADTSLLNLRWSGGYGELTGMYSYNRNTRQMNVGTSGSMAIHSGGIAFGQKTDDTMALIAAPGIAGASVGGWPGVSTDFRGYTLVGHVSPYQENIITLDPTTFPDNTEVSQTDRRVIPTKGALVQAEFKTRVGNRALVTLTRKDGTLLPFGTVVTLERKTGEAFESAGVVDDKGKVYLSGLSEAGKLKAQWGTNSQCYADYKLPLKKGMSGIFLTRAVCM.

A signal peptide spans 1-21 (MKTSSFIIVILLCFRIENVIA). A disulfide bridge links cysteine 819 with cysteine 841.

It belongs to the fimbrial export usher family.

Its subcellular location is the cell outer membrane. In terms of biological role, involved in the export and assembly of the AAF/I fimbriae subunits across the outer membrane. The polypeptide is Outer membrane usher protein AggC (aggC) (Escherichia coli).